The sequence spans 356 residues: Probable neutral protease 2 homolog ARB_04769 (356 aa).

The first 17 residues, 1–17 (MQFTALLAALGAPLALA), serve as a signal peptide directing secretion. The propeptide occupies 18–183 (ASIPAAAHNH…DDSTGVIDKR (166 aa)). 2 disulfides stabilise this stretch: cysteine 191-cysteine 262 and cysteine 269-cysteine 287. Asparagine 205 carries an N-linked (GlcNAc...) asparagine glycan. Histidine 311 provides a ligand contact to Zn(2+). Glutamate 312 is a catalytic residue. Zn(2+)-binding residues include histidine 315 and aspartate 326.

The protein belongs to the peptidase M35 family. The cofactor is Zn(2+).

It is found in the secreted. It catalyses the reaction Preferential cleavage of bonds with hydrophobic residues in P1'. Also 3-Asn-|-Gln-4 and 8-Gly-|-Ser-9 bonds in insulin B chain.. Its function is as follows. Probable secreted metalloprotease that shows high activities on basic nuclear substrates such as histone and protamine. May be involved in virulence. The protein is Probable neutral protease 2 homolog ARB_04769 of Arthroderma benhamiae (strain ATCC MYA-4681 / CBS 112371) (Trichophyton mentagrophytes).